The following is a 367-amino-acid chain: MKASPHRPTKALIHLGAIRQNIQQMGAHIPQGTLKWAVVKANAYGHGAVAVAKAIQDDVDGFCVSNIDEAIELRQAGLSKPILILGVSEIEAVALAKEYDFTLTVAGLEWIQALLDKEVDLTGLTVHLKIDSGMGRIGFREVSEVEQAQDLLQKHGVCVEGIFTHFATADEESDDYFNAQLERFKTILASMKEVPELVHASNSATTLWHVETIFNAVRMGDAMYGLNPSGAVLDLPYDLIPALTLESALVHVKTVPAGACMGYGATYQADSEQVIATVPIGYADGWTRDMQNFSVLVDGQACPIVGRVSMDQITIRLPKLYPLGTKVTLIGSNGDKEITATQVATYRVTINYEVVCLLSDRIPREYY.

Lys40 serves as the catalytic Proton acceptor; specific for D-alanine. Lys40 is modified (N6-(pyridoxal phosphate)lysine). Arg136 is a binding site for substrate. Tyr263 serves as the catalytic Proton acceptor; specific for L-alanine. Met310 lines the substrate pocket.

Belongs to the alanine racemase family. Pyridoxal 5'-phosphate is required as a cofactor.

It carries out the reaction L-alanine = D-alanine. It participates in amino-acid biosynthesis; D-alanine biosynthesis; D-alanine from L-alanine: step 1/1. Functionally, catalyzes the interconversion of L-alanine and D-alanine. May also act on other amino acids. This chain is Alanine racemase (alr), found in Streptococcus pneumoniae (strain 70585).